The following is a 1260-amino-acid chain: Agglutinin-like protein 1 (1260 aa).

The N-terminal stretch at 1–17 (MLQQFTLLFLYLSIASA) is a signal peptide. 4 disulfide bridges follow: cysteine 73–cysteine 150, cysteine 96–cysteine 112, cysteine 205–cysteine 298, and cysteine 227–cysteine 256. 3 ALS repeats span residues 365-396 (TTITTSYVGVTTSYSTKTAPIGETATVIVDVP), 401-432 (TTVTSEWTGTITTTTTRTNPTDSIDTVVVQVP), and 438-469 (VSTTEYWSQSYATTTTVTAPPGGTDTVIIREP). Asparagine 471 is a glycosylation site (N-linked (GlcNAc...) asparagine). The stretch at 474–505 (VTTTEYWSQSFATTTTVTAPPGETDTVIIREP) is one ALS 4 repeat. Residue asparagine 507 is glycosylated (N-linked (GlcNAc...) asparagine). The stretch at 510–541 (VTTTEYWSQSYATTTTVTAPPGGTDTVLIREP) is one ALS 5 repeat. Asparagine 543 carries an N-linked (GlcNAc...) asparagine glycan. Residues 546-577 (VTTTEYWSQSYATTTTVTAPPGGTDTVIIREP) form an ALS 6 repeat. N-linked (GlcNAc...) asparagine glycosylation is present at asparagine 579. One copy of the ALS 7 repeat lies at 582 to 613 (VTTTEYWSQSYATTTTITAPPGETDTVIIREP). An N-linked (GlcNAc...) asparagine glycan is attached at asparagine 615. Residues 618–649 (VTTTEYWSQSYATTTTVTAPPGGTDTVLIREP) form an ALS 8 repeat. An N-linked (GlcNAc...) asparagine glycan is attached at asparagine 651. The ALS 9 repeat unit spans residues 654-685 (VTTTEYWSQSYATTTTVTAPPGGTDTVLIREP). Asparagine 687 carries an N-linked (GlcNAc...) asparagine glycan. The ALS 10 repeat unit spans residues 690–721 (VTTTEYWSQSYATTTTVTAPPGGTDTVIIREP). A glycan (N-linked (GlcNAc...) asparagine) is linked at asparagine 723. The stretch at 726–757 (VTTTEYWSQSYATTTTVTAPPGGTDTVIIREP) is one ALS 11 repeat. An N-linked (GlcNAc...) asparagine glycan is attached at asparagine 759. One copy of the ALS 12 repeat lies at 762 to 791 (VTTTEYWSQSFATTTTVTAPPGGTDTVIIY). Residues asparagine 820, asparagine 886, asparagine 918, and asparagine 973 are each glycosylated (N-linked (GlcNAc...) asparagine). Composition is skewed to polar residues over residues 896–918 (PTASTMSDSLSSTDGISATSSDN) and 964–979 (KVTFTSNGDNQSGTHD). Disordered stretches follow at residues 896–924 (PTASTMSDSLSSTDGISATSSDNVSKSGV) and 954–1226 (SIPS…SSSP). Positions 980 to 995 (SQSTSTEIEIVTTSST) are enriched in low complexity. The span at 1002-1062 (VSSNTDLTSE…PTVATSTLAS (61 aa)) shows a compositional bias: polar residues. N-linked (GlcNAc...) asparagine glycosylation is found at asparagine 1045 and asparagine 1068. Polar residues predominate over residues 1073-1090 (HESASTSLKPSMGENSGL). The span at 1091–1110 (TTSTEIEATTTSPTEAPSPA) shows a compositional bias: low complexity. Residues 1111-1154 (VSSGTDVTTEPTDTREQPTTLSTTSKTNSESVATTQATNENGGK) show a composition bias toward polar residues. Low complexity-rich tracts occupy residues 1155–1176 (SPSTDLTSSLTTGTSASTSANS) and 1197–1226 (SHSTSVTNSNSIVSNTPQTTLSQQVTSSSP). Glycine 1238 carries the GPI-anchor amidated glycine lipid modification. Residues 1239–1260 (SGSIIQHSTWLYGLITLLSLFI) constitute a propeptide, removed in mature form.

Belongs to the ALS family. In terms of processing, the GPI-anchor is attached to the protein in the endoplasmic reticulum and serves to target the protein to the cell surface. There, the glucosamine-inositol phospholipid moiety is cleaved off and the GPI-modified mannoprotein is covalently attached via its lipidless GPI glycan remnant to the 1,6-beta-glucan of the outer cell wall layer.

The protein resides in the cell membrane. Its subcellular location is the secreted. The protein localises to the cell wall. Its function is as follows. Major cell surface adhesion protein which mediates both yeast-to-host tissue adherence and yeast aggregation. Acts as a downstream effector of the EFG1 regulatory pathway. Required for rapamycin-induced aggregation of C.albicans. Binds glycans and mediates adherence to endothelial and epithelial cells, thereby playing an important role in the pathogenesis of C.albicans infections. The polypeptide is Agglutinin-like protein 1 (ALS1) (Candida albicans (strain SC5314 / ATCC MYA-2876) (Yeast)).